The following is a 228-amino-acid chain: Odorant-binding protein 47 (228 aa).

Cystine bridges form between Cys-60–Cys-225, Cys-73–Cys-215, Cys-74–Cys-204, Cys-88–Cys-114, Cys-110–Cys-185, and Cys-158–Cys-195. Asn-117 carries N-linked (GlcNAc...) asparagine glycosylation.

The protein belongs to the PBP/GOBP family. Post-translationally, glycosylated. Head without antennae (at protein level).

The protein localises to the secreted. In terms of biological role, present in the aqueous fluid surrounding olfactory sensory dendrites and are thought to aid in the capture and transport of hydrophobic odorants into and through this fluid. Binds N-phenyl-1-naphthylamine, menthol, citronellal, 1-dodecanol, decanal, p-tert-butylbenzophenone, 4-hydroxy-4'-isopropylazobenzene, 2-pyrrolyl-p-methyl-azobenzene and indole. Expressed in mosquito head but barely detectable in antennae, which suggests that it may be present in mouth structures, such as palpi and proboscis, and may have a function in taste. In Anopheles gambiae (African malaria mosquito), this protein is Odorant-binding protein 47.